The chain runs to 447 residues: N-succinylarginine dihydrolase (447 aa).

Residues 19-28 (AGLSFGNEAS), N110, and 137-138 (HR) each bind substrate. Residue E174 is part of the active site. R213 contacts substrate. The active site involves H249. Residues D251 and N364 each coordinate substrate. The Nucleophile role is filled by C370.

This sequence belongs to the succinylarginine dihydrolase family. As to quaternary structure, homodimer.

It carries out the reaction N(2)-succinyl-L-arginine + 2 H2O + 2 H(+) = N(2)-succinyl-L-ornithine + 2 NH4(+) + CO2. The protein operates within amino-acid degradation; L-arginine degradation via AST pathway; L-glutamate and succinate from L-arginine: step 2/5. In terms of biological role, catalyzes the hydrolysis of N(2)-succinylarginine into N(2)-succinylornithine, ammonia and CO(2). The chain is N-succinylarginine dihydrolase from Yersinia enterocolitica serotype O:8 / biotype 1B (strain NCTC 13174 / 8081).